A 155-amino-acid chain; its full sequence is Endoribonuclease YbeY (155 aa).

Positions 119, 123, and 129 each coordinate Zn(2+).

The protein belongs to the endoribonuclease YbeY family. The cofactor is Zn(2+).

It is found in the cytoplasm. Single strand-specific metallo-endoribonuclease involved in late-stage 70S ribosome quality control and in maturation of the 3' terminus of the 16S rRNA. This Mycoplasmopsis synoviae (strain 53) (Mycoplasma synoviae) protein is Endoribonuclease YbeY.